The sequence spans 545 residues: CTP synthase (545 aa).

Positions 1 to 266 (MTHFIFVTGG…DDLICERFGF (266 aa)) are amidoligase domain. Position 13 (serine 13) interacts with CTP. UTP is bound at residue serine 13. ATP-binding positions include 14–19 (SLGKGI) and aspartate 71. Mg(2+)-binding residues include aspartate 71 and glutamate 140. Residues 147-149 (DIE), 187-192 (KTKPTQ), and lysine 223 contribute to the CTP site. Residues 187 to 192 (KTKPTQ) and lysine 223 contribute to the UTP site. 239-241 (KDA) lines the ATP pocket. The 252-residue stretch at 292 to 543 (RVAMVGKYVE…IDAAKTQHQK (252 aa)) folds into the Glutamine amidotransferase type-1 domain. Glycine 353 is an L-glutamine binding site. Cysteine 380 (nucleophile; for glutamine hydrolysis) is an active-site residue. L-glutamine-binding positions include 381–384 (LGMQ), glutamate 404, and arginine 471. Residues histidine 516 and glutamate 518 contribute to the active site.

The protein belongs to the CTP synthase family. As to quaternary structure, homotetramer.

The enzyme catalyses UTP + L-glutamine + ATP + H2O = CTP + L-glutamate + ADP + phosphate + 2 H(+). It catalyses the reaction L-glutamine + H2O = L-glutamate + NH4(+). It carries out the reaction UTP + NH4(+) + ATP = CTP + ADP + phosphate + 2 H(+). The protein operates within pyrimidine metabolism; CTP biosynthesis via de novo pathway; CTP from UDP: step 2/2. With respect to regulation, allosterically activated by GTP, when glutamine is the substrate; GTP has no effect on the reaction when ammonia is the substrate. The allosteric effector GTP functions by stabilizing the protein conformation that binds the tetrahedral intermediate(s) formed during glutamine hydrolysis. Inhibited by the product CTP, via allosteric rather than competitive inhibition. Functionally, catalyzes the ATP-dependent amination of UTP to CTP with either L-glutamine or ammonia as the source of nitrogen. Regulates intracellular CTP levels through interactions with the four ribonucleotide triphosphates. The chain is CTP synthase from Acinetobacter baumannii (strain ACICU).